Here is a 425-residue protein sequence, read N- to C-terminus: Divalent metal cation transporter MntH (425 aa).

11 consecutive transmembrane segments (helical) span residues 30-50 (LLPFLGPAFIAAIAYIDPGNF), 61-81 (GYMLLWVILFSNIMALLIQSL), 107-127 (IGLWIQGELVIIATDLAEFIG), 134-154 (LLFGIPMLEASIIAAIGSFAI), 167-187 (AGIAGMLFVVVIAFALQTFFA), 209-231 (VLLAAGILGATVMPHAIYLHSAL), 255-275 (ILIAMLIAGAINASMLIVAAA), 294-314 (FGHLVSPMSAALFGIGLLVAG), 344-364 (FITIIPPILIIASGVNPTTAL), 365-385 (VLSQVVLSFGIAFALIPLIMF), and 401-421 (ITVVSWLIAVLIVALNVFLIV).

The protein belongs to the NRAMP family.

The protein localises to the cell membrane. Its function is as follows. H(+)-stimulated, divalent metal cation uptake system. Involved in manganese uptake. Can probably also transport cadmium, cobalt, copper and zinc, but not iron. May be the predominant transporter of manganese during logarithmic phase growth. In Bacillus subtilis (strain 168), this protein is Divalent metal cation transporter MntH.